The chain runs to 621 residues: Cyclic nucleotide-gated ion channel 11 (621 aa).

Over 1-43 the chain is Cytoplasmic; the sequence is MNLQRRKFVRLDSTGVDGKLKSVRGRLKKVYGKMKTLENWRKT. The chain crosses the membrane as a helical span at residues 44-64; it reads VLLACVVALAIDPLFLFIPLI. Residues 65–76 are Extracellular-facing; that stretch reads DSQRFCFTFDKT. Residues 77–97 traverse the membrane as a helical segment; it reads LVAVVCVIRTFIDTFYVIHII. Over 98–128 the chain is Cytoplasmic; the sequence is YYLITETIAPRSQASLRGEIVVHSKATLKTR. Residues 129 to 149 traverse the membrane as a helical segment; sequence LLFHFIVDIISVLPIPQVVVL. At 150–162 the chain is on the extracellular side; the sequence is TLIPLSASLVSER. A helical transmembrane segment spans residues 163-183; it reads ILKWIILSQYVPRIIRMYPLY. The Cytoplasmic portion of the chain corresponds to 184–198; that stretch reads KEVTRAFGTVAESKR. The chain crosses the membrane as a helical span at residues 199 to 219; that stretch reads VGAALNFFLYMLHSYVCGAFW. At 220–329 the chain is on the extracellular side; it reads YLSSIERKST…QNLETSNSAG (110 aa). A helical membrane pass occupies residues 330 to 350; the sequence is EIFFAIIICVSGLLLFAVLIG. The Cytoplasmic segment spans residues 351 to 621; the sequence is NVQKYLQSST…KLNLGAAIYA (271 aa). Residues 435–556 and Asp506 contribute to the a nucleoside 3',5'-cyclic phosphate site; that span reads LLQA…HSKQ. The interval 549-564 is calmodulin-binding; the sequence is YRRLHSKQLQHMFRFY. An IQ domain is found at 569-598; sequence QTWAACFIQAAWKRHCRRKLSKALREEEGK.

The protein belongs to the cyclic nucleotide-gated cation channel (TC 1.A.1.5) family. Homotetramer or heterotetramer.

It is found in the cell membrane. Functionally, putative cyclic nucleotide-gated ion channel. In Arabidopsis thaliana (Mouse-ear cress), this protein is Cyclic nucleotide-gated ion channel 11 (CNGC11).